The following is a 306-amino-acid chain: MLHGMSPECALSKLLSSLEFHTLYRYTMTQKHNFPSNNKDTLHLPRILCLHGGGTNARIFRAQCRALEKALRTSFRLCYAEALFPSQPGPDVTAVYRDFGPFRAWIDSPDANPVTMTEALQISICKAIMEDDQRGATGPVVGLLGFSQGAKVCASLILEQQLLGRTFGDHSHLPFRLPQWRFAVLLAGRGPLVTLSHLSVGADIMQKMAHLCENDDSSGLDSQENLGNVILTRELIQVPTIHVHGRKDPALDLHRKLYYDDFDPRYSKVMEWDGAHRVPLKSKDVATLVKEINVLWASVSHSNVQG.

Residues Ser-147, Asp-248, and His-276 each act as charge relay system in the active site.

Belongs to the LovG family.

It participates in secondary metabolite biosynthesis. In terms of biological role, esterase; part of the gene cluster that mediates the biosynthesis of the tropolone class of fungal maleic anhydrides. The pathway begins with the synthesis of 3-methylorcinaldehyde by the non-reducing polyketide synthase (PKS) tropA. 3-methylorcinaldehyde is the substrate for the FAD-dependent monooxygenase tropB to yield a dearomatized hydroxycyclohexadione. The 2-oxoglutarate-dependent dioxygenase tropC then performs the oxidative ring expansion to provide the first tropolone metabolite stipitaldehyde. Trop D converts stipitaldehyde into stipitacetal which is in turn converted to stipitalide by the short-chain dehydrogenase/reductase tropE. The next steps involve tropF, tropG, tropH, tropI and tropJ to form successive tropolone maleic anhydrides including stipitaldehydic, stipitatonic and stipitatic acids. The protein is Esterase tropF of Talaromyces stipitatus (strain ATCC 10500 / CBS 375.48 / QM 6759 / NRRL 1006) (Penicillium stipitatum).